We begin with the raw amino-acid sequence, 394 residues long: Probable nucleoredoxin 2 (394 aa).

Thioredoxin domains are found at residues 15-176 (GVGG…QTLE) and 180-327 (SVSG…EMED).

It belongs to the nucleoredoxin family.

The catalysed reaction is [protein]-dithiol + NAD(+) = [protein]-disulfide + NADH + H(+). The enzyme catalyses [protein]-dithiol + NADP(+) = [protein]-disulfide + NADPH + H(+). Functionally, probable thiol-disulfide oxidoreductase that may participate in various redox reactions. The sequence is that of Probable nucleoredoxin 2 from Oryza sativa subsp. japonica (Rice).